A 313-amino-acid polypeptide reads, in one-letter code: Beta-ketoacyl-[acyl-carrier-protein] synthase III (313 aa).

Active-site residues include Cys112 and His238. Positions 239-243 are ACP-binding; it reads QANIR. Asn268 is a catalytic residue.

This sequence belongs to the thiolase-like superfamily. FabH family. Homodimer.

The protein resides in the cytoplasm. The enzyme catalyses malonyl-[ACP] + acetyl-CoA + H(+) = 3-oxobutanoyl-[ACP] + CO2 + CoA. Its pathway is lipid metabolism; fatty acid biosynthesis. Catalyzes the condensation reaction of fatty acid synthesis by the addition to an acyl acceptor of two carbons from malonyl-ACP. Catalyzes the first condensation reaction which initiates fatty acid synthesis and may therefore play a role in governing the total rate of fatty acid production. Possesses both acetoacetyl-ACP synthase and acetyl transacylase activities. Its substrate specificity determines the biosynthesis of branched-chain and/or straight-chain of fatty acids. This is Beta-ketoacyl-[acyl-carrier-protein] synthase III from Staphylococcus aureus (strain COL).